The primary structure comprises 586 residues: RNA-directed RNA polymerase subunit beta (586 aa).

Positions 259–391 constitute a RdRp catalytic domain; it reads VRAYSGSCSN…TNEKKTFFDG (133 aa). D274, D359, and D360 together coordinate Mg(2+).

Homodimer; the replicase complex can dimerize. Part of the viral RNA-dependent RNA polymerase complex, the other subunits are the host ribosomal protein S1, EF-Tu and EF-Ts. S1 is needed for the initiation of genomic RNA (+)-strand replication. Mg(2+) is required as a cofactor.

The enzyme catalyses RNA(n) + a ribonucleoside 5'-triphosphate = RNA(n+1) + diphosphate. Its function is as follows. This is the catalytic subunit of the viral RNA-dependent RNA polymerase complex. This complex is involved in viral RNA replication that produces (+)-stranded genomes via a complementary, (-)-stranded intermediate. Binds RNA cooperatively with the host ribosomal protein S1. The chain is RNA-directed RNA polymerase subunit beta from Escherichia coli.